The following is a 347-amino-acid chain: D-alanine--D-alanine ligase (347 aa).

The ATP-grasp domain maps to 131–333 (KRVLESAGIA…YPELIERLVD (203 aa)). Position 161–216 (161–216 (EEKLAYPVFTKPSNMGSSVGISKSENQEELRQALKLAFRYDSRVLVEQGVNAREIE)) interacts with ATP. Mg(2+) is bound by residues aspartate 287, glutamate 300, and asparagine 302.

This sequence belongs to the D-alanine--D-alanine ligase family. It depends on Mg(2+) as a cofactor. Mn(2+) serves as cofactor.

The protein localises to the cytoplasm. It catalyses the reaction 2 D-alanine + ATP = D-alanyl-D-alanine + ADP + phosphate + H(+). The protein operates within cell wall biogenesis; peptidoglycan biosynthesis. Cell wall formation. The chain is D-alanine--D-alanine ligase from Streptococcus pneumoniae (strain JJA).